The sequence spans 569 residues: BICD family-like cargo adapter 1 (569 aa).

The tract at residues 1 to 36 (MSASCLDLISAPPQPDSDRMDRALNPGRQNSPDTAG) is disordered. A CC1 box motif is present at residues 97 to 101 (AAKLG). Residues 102-283 (KALLERNQDL…TLELEKHCHH (182 aa)) are a coiled coil. Residues 385 to 405 (ALSTDSSMDESSETLSAKDVP) form a disordered region. Residues 458–520 (NEQLQSAIRD…LEAWQDDMHR (63 aa)) are a coiled coil. Residues 533–554 (EWKDPPFSFSRRGAAASRPTQR) are disordered.

This sequence belongs to the BICDR family. As to quaternary structure, part of a tripartite complex with dynein and dynactin, acts an adapter linking the dynein motor complex and dynactin. In terms of tissue distribution, highly expressed in developing neural tissues and developing eye.

The protein resides in the cytoplasm. The protein localises to the cytoskeleton. It localises to the microtubule organizing center. Its subcellular location is the centrosome. Functionally, acts as an adapter protein linking the dynein motor complex to various cargos and converts dynein from a non-processive to a highly processive motor in the presence of dynactin. Facilitates the interaction between dynein and dynactin and activates dynein processivity (the ability to move along a microtubule for a long distance without falling off the track). Predominantly recruits 2 dyneins, which increases both the force and speed of the microtubule motor. Component of secretory vesicle machinery in developing neurons that acts as a regulator of neurite outgrowth. Regulates the secretory vesicle transport by controlling the accumulation of Rab6-containing secretory vesicles in the pericentrosomal region restricting anterograde secretory transport during the early phase of neuronal differentiation, thereby inhibiting neuritogenesis. The protein is BICD family-like cargo adapter 1 (bicdl1) of Danio rerio (Zebrafish).